A 401-amino-acid polypeptide reads, in one-letter code: Imidazolonepropionase (401 aa).

Residues histidine 66 and histidine 68 each coordinate Fe(3+). Positions 66 and 68 each coordinate Zn(2+). Residues arginine 75, tyrosine 138, and histidine 171 each contribute to the 4-imidazolone-5-propanoate site. Tyrosine 138 serves as a coordination point for N-formimidoyl-L-glutamate. Residue histidine 236 participates in Fe(3+) binding. Histidine 236 is a Zn(2+) binding site. Glutamine 239 is a binding site for 4-imidazolone-5-propanoate. Fe(3+) is bound at residue aspartate 311. Zn(2+) is bound at residue aspartate 311. 2 residues coordinate N-formimidoyl-L-glutamate: asparagine 313 and glycine 315. Threonine 316 is a 4-imidazolone-5-propanoate binding site.

It belongs to the metallo-dependent hydrolases superfamily. HutI family. Requires Zn(2+) as cofactor. Fe(3+) is required as a cofactor.

It localises to the cytoplasm. The catalysed reaction is 4-imidazolone-5-propanoate + H2O = N-formimidoyl-L-glutamate. The protein operates within amino-acid degradation; L-histidine degradation into L-glutamate; N-formimidoyl-L-glutamate from L-histidine: step 3/3. In terms of biological role, catalyzes the hydrolytic cleavage of the carbon-nitrogen bond in imidazolone-5-propanoate to yield N-formimidoyl-L-glutamate. It is the third step in the universal histidine degradation pathway. In Acinetobacter baumannii (strain AB307-0294), this protein is Imidazolonepropionase.